The primary structure comprises 200 residues: 3-isopropylmalate dehydratase small subunit (200 aa).

It belongs to the LeuD family. LeuD type 1 subfamily. Heterodimer of LeuC and LeuD.

The catalysed reaction is (2R,3S)-3-isopropylmalate = (2S)-2-isopropylmalate. It participates in amino-acid biosynthesis; L-leucine biosynthesis; L-leucine from 3-methyl-2-oxobutanoate: step 2/4. Functionally, catalyzes the isomerization between 2-isopropylmalate and 3-isopropylmalate, via the formation of 2-isopropylmaleate. This is 3-isopropylmalate dehydratase small subunit from Actinobacillus pleuropneumoniae serotype 5b (strain L20).